We begin with the raw amino-acid sequence, 324 residues long: Appendage-associated protein (324 aa).

The signal sequence occupies residues 1–32; it reads MGCPVSRGGSPGCGRRIAEELRLAEDARLRLA. Positions 195 to 255 form a coiled coil; sequence IAQAKEIAQA…AADKLQALGK (61 aa).

Its subcellular location is the secreted. Associates with actin filament appendages that are formed in the inclusion appendages of the parasitophorous vacuole during infection of the host erythrocyte. The protein is Appendage-associated protein (aaaP1) of Anaplasma marginale (strain Florida).